Here is a 300-residue protein sequence, read N- to C-terminus: DDRGK domain-containing protein 1 (300 aa).

Residues 1–2 are Lumenal-facing; the sequence is MD. A helical transmembrane segment spans residues 3–23; sequence VVLYIAAAAILLVLIVFSVKI. At 24–300 the chain is on the cytoplasmic side; the sequence is RGRTQDADVE…NLTPDIHSSA (277 aa). Residues 28-173 are disordered; that stretch reads QDADVEDHQN…RVKEEQERRE (146 aa). Residues 78–90 are compositionally biased toward acidic residues; that stretch reads NEDSPVEADEDEE. Positions 112–173 are enriched in basic and acidic residues; that stretch reads KLEEKQARKA…RVKEEQERRE (62 aa). Positions 183-197 match the UFM1-interacting motif (UFIM) motif; that stretch reads SFIIEDQGEAEELTE. One can recognise a PCI domain in the interval 217–261; the sequence is VLLEDLASQFGLRTQDAIARLQDLIADGSLTGVIDDRGKFIFITP.

It belongs to the DDRGK1 family. Component of the UFM1 ribosome E3 ligase (UREL) complex, composed of ufl1, ddrgk1 and cdk5rap3.

The protein localises to the endoplasmic reticulum membrane. Component of the UFM1 ribosome E3 ligase (UREL) complex, a multiprotein complex that catalyzes ufmylation of endoplasmic reticulum-docked proteins. The UREL complex plays a key role in ribosome recycling by mediating mono-ufmylation of the RPL26/uL24 subunit of the 60S ribosome following ribosome dissociation: ufmylation weakens the junction between post-termination 60S subunits and SEC61 translocons, promoting release and recycling of the large ribosomal subunit from the endoplasmic reticulum membrane. Ufmylation of RPL26/uL24 and subsequent 60S ribosome recycling either take place after normal termination of translation or after ribosome stalling during cotranslational translocation at the endoplasmic reticulum. Within the UREL complex, DDRGK1 tethers the complex to the endoplasmic reticulum membrane to restrict its activity to endoplasmic reticulum-docked ribosomes and acts as an ufmylation 'reader': following RPL26/uL24 ufmylation, DDRGK1 specifically binds to ufmylated RPL26/uL24 via its UFIM motif, resulting in stable association between the 60S ribosome and the UREL complex, followed by dissociation of the 60S ribosome subunit from the endoplasmic reticulum membrane. The UREL complex is also involved in reticulophagy in response to endoplasmic reticulum stress by promoting ufmylation of proteins such as CYB5R3 and RPN1, thereby promoting lysosomal degradation of ufmylated proteins. Plays a role in cartilage development through sox9, inhibiting the ubiquitin-mediated proteasomal degradation of this transcriptional regulator. Required for stabilization and ufmylation of ATG9A. This is DDRGK domain-containing protein 1 from Danio rerio (Zebrafish).